The primary structure comprises 191 residues: Molybdenum cofactor guanylyltransferase (191 aa).

Residues 13–15 (LAG), K26, D72, and D102 contribute to the GTP site. D102 contacts Mg(2+).

This sequence belongs to the MobA family. Monomer. Mg(2+) serves as cofactor.

It localises to the cytoplasm. It catalyses the reaction Mo-molybdopterin + GTP + H(+) = Mo-molybdopterin guanine dinucleotide + diphosphate. In terms of biological role, transfers a GMP moiety from GTP to Mo-molybdopterin (Mo-MPT) cofactor (Moco or molybdenum cofactor) to form Mo-molybdopterin guanine dinucleotide (Mo-MGD) cofactor. The chain is Molybdenum cofactor guanylyltransferase from Pseudomonas putida (strain ATCC 47054 / DSM 6125 / CFBP 8728 / NCIMB 11950 / KT2440).